A 363-amino-acid chain; its full sequence is Aminomethyltransferase (363 aa).

The protein belongs to the GcvT family. In terms of assembly, the glycine cleavage system is composed of four proteins: P, T, L and H.

It catalyses the reaction N(6)-[(R)-S(8)-aminomethyldihydrolipoyl]-L-lysyl-[protein] + (6S)-5,6,7,8-tetrahydrofolate = N(6)-[(R)-dihydrolipoyl]-L-lysyl-[protein] + (6R)-5,10-methylene-5,6,7,8-tetrahydrofolate + NH4(+). Its function is as follows. The glycine cleavage system catalyzes the degradation of glycine. In Staphylococcus aureus (strain MRSA252), this protein is Aminomethyltransferase.